Consider the following 2339-residue polypeptide: Voltage-dependent N-type calcium channel subunit alpha-1B (2339 aa).

At 1 to 90 (MVRFGDELGG…DNVVRKYAKR (90 aa)) the chain is on the cytoplasmic side. A compositionally biased stretch (gly residues) spans 15–34 (AGGAERARGGGAGGAGGPGP). The tract at residues 15 to 37 (AGGAERARGGGAGGAGGPGPGGL) is disordered. R22 bears the Omega-N-methylarginine mark. An I repeat occupies 82-359 (NVVRKYAKRI…LVLGVLSGEF (278 aa)). A helical transmembrane segment spans residues 91-114 (ITEWPPFEYMILATIIANCIVLAL). Residues 115-131 (EQHLPDGDKTPMSERLD) lie on the Extracellular side of the membrane. A helical transmembrane segment spans residues 132–152 (DTEPYFIGIFCFEAGIKILAL). Over 153 to 163 (GFVLHKGSYLR) the chain is Cytoplasmic. The helical transmembrane segment at 164–182 (NGWNVMDFVVVLTGILATA) threads the bilayer. Topologically, residues 183-187 (GTDFD) are extracellular. The helical transmembrane segment at 188–211 (LRTLRAVRVLRPLKLVSGIPSLQV) threads the bilayer. The Cytoplasmic portion of the chain corresponds to 212–221 (VLKSIMKAMV). The helical transmembrane segment at 222–244 (PLLQIGLLLFFAILMFAIIGLEF) threads the bilayer. The Extracellular segment spans residues 245 to 331 (YMGKFHKACF…NTNDAAGNTW (87 aa)). An N-linked (GlcNAc...) asparagine glycan is attached at N256. A helical transmembrane segment spans residues 332-356 (NWLYFIPLIIIGSFFMLNLVLGVLS). Over 357–483 (GEFAKERERV…FFIRRMVKAQ (127 aa)) the chain is Cytoplasmic. Positions 379–396 (QQIERELNGYLEWIFKAE) are binding to the beta subunit. At S411 the chain carries Phosphoserine. 452-459 (ASLKSGKT) serves as a coordination point for ATP. The stretch at 469–713 (EKMFRFFIRR…VFLAIAVDNL (245 aa)) is one II repeat. Residues 484–502 (SFYWTVLCVVALNTLCVAM) form a helical membrane-spanning segment. Over 503 to 512 (VHYNQPQRLT) the chain is Extracellular. A helical membrane pass occupies residues 513–535 (TALYFAEFVFLGLFLTEMSLKMY). Topologically, residues 536–545 (GLGPRSYFRS) are cytoplasmic. S545 contacts a 1,2-diacyl-sn-glycero-3-phospho-(1D-myo-inositol-4,5-bisphosphate). A helical transmembrane segment spans residues 546–567 (SFNCFDFGVIVGSIFEVVWAAV). Residues 568–574 (KPGTSFG) lie on the Extracellular side of the membrane. Residues 575–587 (ISVLRALRLLRIF) traverse the membrane as a helical segment. Residues R585 and K588 each coordinate a 1,2-diacyl-sn-glycero-3-phospho-(1D-myo-inositol-4,5-bisphosphate). Residues 588 to 605 (KVTKYWNSLRNLVVSLLN) are Cytoplasmic-facing. A helical membrane pass occupies residues 606–631 (SMKSIISLLFLLFLFIVVFALLGMQL). Residues 632-683 (FGGQFNFKDETPTTNFDTFPAAILTVFQILTGEDWNAVMYHGIESQGGVSRG) are Extracellular-facing. The chain crosses the membrane as a helical span at residues 684-710 (MFSSFYFIVLTLFGNYTLLNVFLAIAV). Residues 711-1156 (DNLANAQELT…CCHYIVTMRY (446 aa)) are Cytoplasmic-facing. S746, S749, and S784 each carry phosphoserine. 5 stretches are compositionally biased toward basic and acidic residues: residues 809–827 (DVKTHLDRPLVVEPGRDAP), 870–891 (EQDRAEALRAEGGELGPREERG), 927–937 (GSPEEAAEREP), 973–984 (CPREAESSEEPA), and 999–1026 (TAEKDKEAAEKGGEATEAEKDKEARNHQ). Disordered stretches follow at residues 809 to 1026 (DVKT…RNHQ) and 1056 to 1084 (VEEQPEDADNQRNVTRMGSQPPDTSTTVH). Residues 1066–1083 (QRNVTRMGSQPPDTSTTV) show a composition bias toward polar residues. The residue at position 1074 (S1074) is a Phosphoserine. An III repeat occupies 1142–1424 (NLLRRCCHYI…IFVALIIITF (283 aa)). A helical transmembrane segment spans residues 1157-1175 (FEMVILVVIALSSIALAAE). Residues 1176–1183 (DPVRTDSP) lie on the Extracellular side of the membrane. The helical transmembrane segment at 1184 to 1208 (RNNALKYMDYIFTGVFTFEMVIKMI) threads the bilayer. At 1209–1222 (DLGLLLHPGAYFRD) the chain is on the cytoplasmic side. A helical transmembrane segment spans residues 1223–1243 (LWNILDFIVVSGALVAFAFSG). At 1244–1249 (SKGKDI) the chain is on the extracellular side. Residues 1250–1270 (STIKSLRVLRVLRPLKTIKRL) traverse the membrane as a helical segment. At 1271–1288 (PKLKAVFDCVVNSLKNVL) the chain is on the cytoplasmic side. A helical membrane pass occupies residues 1289–1308 (NILIVYMLFMFIFAVIAVQL). Over 1309–1395 (FKGKFFYCTD…EQGPSPGYRM (87 aa)) the chain is Extracellular. A helical transmembrane segment spans residues 1396–1421 (ELSIFYVVYFVVFPFFFVNIFVALII). The Cytoplasmic portion of the chain corresponds to 1422 to 1476 (ITFQEQGDKVMSECSLEKNERACIDFAISARPLTRYMPQNKQSFQYKTWTFVVSP). An IV repeat occupies 1461-1714 (NKQSFQYKTW…LFVAVIMDNF (254 aa)). The chain crosses the membrane as a helical span at residues 1477–1495 (PFEYFIMAMIALNTVVLMM). Over 1496 to 1503 (KFYDAPYE) the chain is Extracellular. Residues 1504–1528 (YELMLKCLNIVFTSMFSMECVLKII) traverse the membrane as a helical segment. Over 1529-1538 (AFGVLNYFRD) the chain is Cytoplasmic. Residues 1539–1560 (AWNVFDFVTVLGSITDILVTEI) traverse the membrane as a helical segment. Over 1561–1566 (ANNFIN) the chain is Extracellular. N-linked (GlcNAc...) asparagine glycosylation is present at N1566. The helical transmembrane segment at 1567–1585 (LSFLRLFRAARLIKLLRQG) threads the bilayer. Topologically, residues 1586–1604 (YTIRILLWTFVQSFKALPY) are cytoplasmic. A helical transmembrane segment spans residues 1605–1624 (VCLLIAMLFFIYAIIGMQVF). Topologically, residues 1625–1686 (GNIALDDDTS…SNASECGSDF (62 aa)) are extracellular. N1678 carries an N-linked (GlcNAc...) asparagine glycan. A helical membrane pass occupies residues 1687–1710 (AYFYFVSFIFLCSFLMLNLFVAVI). At 1711-2339 (MDNFEYLTRD…CHHPDRDRRC (629 aa)) the chain is on the cytoplasmic side. The region spanning 1727 to 1762 (HHLDEFIRVWAEYDPAACGRISYSDMFEMLKHMSPP) is the EF-hand domain. 3 residues coordinate Ca(2+): D1740, R1746, and D1751. Positions 1983–2312 (TLSGPDAEPQ…QPPPLRRVPN (330 aa)) are disordered. Over residues 2050-2064 (PHHHHHRCHRRRDRK) the composition is skewed to basic residues. A Phosphoserine modification is found at S2067. Residues 2099 to 2136 (CRRERERRQERGRSQERRQPSSSSSEKHRFYSCDRFGG) are compositionally biased toward basic and acidic residues. Composition is skewed to polar residues over residues 2144–2155 (PSLSSHPTSPTA) and 2165–2181 (GSGSVHGSPLLSTSGAS). Phosphoserine is present on residues S2224, S2233, and S2256. A compositionally biased stretch (low complexity) spans 2286–2302 (SNSGRSSRTSYVSSLTS).

Belongs to the calcium channel alpha-1 subunit (TC 1.A.1.11) family. CACNA1B subfamily. As to quaternary structure, multisubunit complex consisting of alpha-1, alpha-2, beta and delta subunits in a 1:1:1:1 ratio. The channel activity is directed by the pore-forming and voltage-sensitive alpha-1 subunit. In many cases, this subunit is sufficient to generate voltage-sensitive calcium channel activity. The auxiliary subunits beta and alpha-2/delta linked by a disulfide bridge regulate the channel activity. Interacts with RIMS1. Interacts with FMR1 (via C-terminus); this interaction induces a decrease in the number of presynaptic functional CACNA1B channels at the cell surface. In terms of processing, phosphorylated in vitro by CaM-kinase II, PKA, PKC and CGPK. As to expression, widespread expression throughout the brain. Highest levels in corpus striatum and midbrain.

It localises to the membrane. The enzyme catalyses Ca(2+)(in) = Ca(2+)(out). Its activity is regulated as follows. Is specifically blocked by omega-conotoxin GVIA. Is specifically blocked by omega-conotoxin MVIIA (ziconotide). Is insensitive to dihydropyridines (DHP). In terms of biological role, voltage-sensitive calcium channels (VSCC) mediate the entry of calcium ions into excitable cells and are also involved in a variety of calcium-dependent processes, including muscle contraction, hormone or neurotransmitter release, gene expression, cell motility, cell division and cell death. This alpha-1B subunit gives rise to N-type calcium currents. N-type calcium channels belong to the 'high-voltage activated' (HVA) group. They are involved in pain signaling. Calcium channels containing alpha-1B subunit may play a role in directed migration of immature neurons. Mediates Ca(2+) release probability at hippocampal neuronal soma and synaptic terminals. This chain is Voltage-dependent N-type calcium channel subunit alpha-1B (CACNA1B), found in Oryctolagus cuniculus (Rabbit).